The following is a 314-amino-acid chain: tRNA pseudouridine synthase B (314 aa).

Asp47 acts as the Nucleophile in catalysis.

It belongs to the pseudouridine synthase TruB family. Type 1 subfamily.

It carries out the reaction uridine(55) in tRNA = pseudouridine(55) in tRNA. In terms of biological role, responsible for synthesis of pseudouridine from uracil-55 in the psi GC loop of transfer RNAs. This Vibrio vulnificus (strain CMCP6) protein is tRNA pseudouridine synthase B.